A 230-amino-acid chain; its full sequence is 2-C-methyl-D-erythritol 4-phosphate cytidylyltransferase (230 aa).

The protein belongs to the IspD/TarI cytidylyltransferase family. IspD subfamily.

The catalysed reaction is 2-C-methyl-D-erythritol 4-phosphate + CTP + H(+) = 4-CDP-2-C-methyl-D-erythritol + diphosphate. Its pathway is isoprenoid biosynthesis; isopentenyl diphosphate biosynthesis via DXP pathway; isopentenyl diphosphate from 1-deoxy-D-xylulose 5-phosphate: step 2/6. Its function is as follows. Catalyzes the formation of 4-diphosphocytidyl-2-C-methyl-D-erythritol from CTP and 2-C-methyl-D-erythritol 4-phosphate (MEP). The sequence is that of 2-C-methyl-D-erythritol 4-phosphate cytidylyltransferase from Shewanella halifaxensis (strain HAW-EB4).